A 147-amino-acid chain; its full sequence is Austinoid biosynthesis clusters protein H (147 aa).

It belongs to the trt14 isomerase family. As to quaternary structure, homodimer.

Its pathway is secondary metabolite biosynthesis; terpenoid biosynthesis. In terms of biological role, part of the gene cluster B that mediates the biosynthesis of the fungal meroterpenoid acetoxydehydroaustin. The first step of the pathway is the synthesis of 3,5-dimethylorsellinic acid by the polyketide synthase ausA. 3,5-dimethylorsellinic acid is then prenylated by the polyprenyl transferase ausN. Further epoxidation by the FAD-dependent monooxygenase ausM and cyclization by the probable terpene cyclase ausL lead to the formation of protoaustinoid A. Protoaustinoid A is then oxidized to spiro-lactone preaustinoid A3 by the combined action of the FAD-binding monooxygenases ausB and ausC, and the dioxygenase ausE. Acid-catalyzed keto-rearrangement and ring contraction of the tetraketide portion of preaustinoid A3 by ausJ lead to the formation of preaustinoid A4. The aldo-keto reductase ausK, with the help of ausH, is involved in the next step by transforming preaustinoid A4 into isoaustinone which is in turn hydroxylated by the P450 monooxygenase ausI to form austinolide. The cytochrome P450 monooxygenase ausG then modifies austinolide to austinol. Austinol is further acetylated to austin by the O-acetyltransferase ausP, which spontaneously changes to dehydroaustin. The cytochrome P450 monooxygenase then converts dehydroaustin is into 7-dehydrodehydroaustin. The hydroxylation catalyzed by ausR permits the second O-acetyltransferase ausQ to add an additional acetyl group to the molecule, leading to the formation of acetoxydehydroaustin. Due to genetic rearrangements of the clusters and the subsequent loss of some enzymes, the end product of the Penicillium brasilianum austinoid biosynthesis clusters is acetoxydehydroaustin. The chain is Austinoid biosynthesis clusters protein H from Penicillium brasilianum.